Here is a 353-residue protein sequence, read N- to C-terminus: Photosystem II D2 protein (353 aa).

N-acetylthreonine is present on T2. Residue T2 is modified to Phosphothreonine. The chain crosses the membrane as a helical span at residues 41 to 61; that stretch reads CAYFALGGWFTGTTFVTSWYT. H118 is a binding site for chlorophyll a. The helical transmembrane segment at 125–141 threads the bilayer; sequence GFMLRQFELARSVQLRP. Pheophytin a is bound by residues Q130 and N143. Residues 153 to 166 traverse the membrane as a helical segment; that stretch reads VFVSVFLIYPLGQS. A chlorophyll a-binding site is contributed by H198. The helical transmembrane segment at 208-228 threads the bilayer; sequence AALLCAIHGATVENTLFEDGD. 2 residues coordinate a plastoquinone: H215 and F262. A Fe cation-binding site is contributed by H215. H269 contributes to the Fe cation binding site. Residues 279 to 295 form a helical membrane-spanning segment; that stretch reads GLWMSALGVVGLALNLR.

It belongs to the reaction center PufL/M/PsbA/D family. In terms of assembly, PSII is composed of 1 copy each of membrane proteins PsbA, PsbB, PsbC, PsbD, PsbE, PsbF, PsbH, PsbI, PsbJ, PsbK, PsbL, PsbM, PsbT, PsbX, PsbY, PsbZ, Psb30/Ycf12, at least 3 peripheral proteins of the oxygen-evolving complex and a large number of cofactors. It forms dimeric complexes. It depends on The D1/D2 heterodimer binds P680, chlorophylls that are the primary electron donor of PSII, and subsequent electron acceptors. It shares a non-heme iron and each subunit binds pheophytin, quinone, additional chlorophylls, carotenoids and lipids. There is also a Cl(-1) ion associated with D1 and D2, which is required for oxygen evolution. The PSII complex binds additional chlorophylls, carotenoids and specific lipids. as a cofactor.

Its subcellular location is the plastid. It is found in the chloroplast thylakoid membrane. The catalysed reaction is 2 a plastoquinone + 4 hnu + 2 H2O = 2 a plastoquinol + O2. Functionally, photosystem II (PSII) is a light-driven water:plastoquinone oxidoreductase that uses light energy to abstract electrons from H(2)O, generating O(2) and a proton gradient subsequently used for ATP formation. It consists of a core antenna complex that captures photons, and an electron transfer chain that converts photonic excitation into a charge separation. The D1/D2 (PsbA/PsbD) reaction center heterodimer binds P680, the primary electron donor of PSII as well as several subsequent electron acceptors. D2 is needed for assembly of a stable PSII complex. This chain is Photosystem II D2 protein, found in Barbarea verna (Land cress).